A 235-amino-acid chain; its full sequence is Phosphoribosylaminoimidazole-succinocarboxamide synthase (235 aa).

It belongs to the SAICAR synthetase family.

It carries out the reaction 5-amino-1-(5-phospho-D-ribosyl)imidazole-4-carboxylate + L-aspartate + ATP = (2S)-2-[5-amino-1-(5-phospho-beta-D-ribosyl)imidazole-4-carboxamido]succinate + ADP + phosphate + 2 H(+). Its pathway is purine metabolism; IMP biosynthesis via de novo pathway; 5-amino-1-(5-phospho-D-ribosyl)imidazole-4-carboxamide from 5-amino-1-(5-phospho-D-ribosyl)imidazole-4-carboxylate: step 1/2. In Streptococcus pneumoniae (strain ATCC 700669 / Spain 23F-1), this protein is Phosphoribosylaminoimidazole-succinocarboxamide synthase.